A 184-amino-acid polypeptide reads, in one-letter code: MKNVIDPFISLSYWPSAGGFGSNTNILETNIINPSVVLSVLIYFGKGVLSNLLDNRKQKILNTIRNSEELCKGAIDQLEKARARLREVEMIGDEIRVNGDSQVEREKEDLINAASENLEQLEDPKNETIYSEQQRAIDQIRQQVSRQALRRTIGTLNSRFKIELHLRTINQNIGLFRTMMNTPD.

The chain crosses the membrane as a helical span at residues 31 to 49 (IINPSVVLSVLIYFGKGVL).

It belongs to the ATPase B chain family. As to quaternary structure, F-type ATPases have 2 components, F(1) - the catalytic core - and F(0) - the membrane proton channel. F(1) has five subunits: alpha(3), beta(3), gamma(1), delta(1), epsilon(1). F(0) has four main subunits: a(1), b(1), b'(1) and c(10-14). The alpha and beta chains form an alternating ring which encloses part of the gamma chain. F(1) is attached to F(0) by a central stalk formed by the gamma and epsilon chains, while a peripheral stalk is formed by the delta, b and b' chains.

The protein localises to the plastid. It is found in the chloroplast thylakoid membrane. Functionally, f(1)F(0) ATP synthase produces ATP from ADP in the presence of a proton or sodium gradient. F-type ATPases consist of two structural domains, F(1) containing the extramembraneous catalytic core and F(0) containing the membrane proton channel, linked together by a central stalk and a peripheral stalk. During catalysis, ATP synthesis in the catalytic domain of F(1) is coupled via a rotary mechanism of the central stalk subunits to proton translocation. Its function is as follows. Component of the F(0) channel, it forms part of the peripheral stalk, linking F(1) to F(0). The chain is ATP synthase subunit b, chloroplastic from Pinus koraiensis (Korean pine).